A 144-amino-acid chain; its full sequence is Large ribosomal subunit protein uL13 (144 aa).

It belongs to the universal ribosomal protein uL13 family. Part of the 50S ribosomal subunit.

This protein is one of the early assembly proteins of the 50S ribosomal subunit, although it is not seen to bind rRNA by itself. It is important during the early stages of 50S assembly. The sequence is that of Large ribosomal subunit protein uL13 from Mycoplasmopsis agalactiae (strain NCTC 10123 / CIP 59.7 / PG2) (Mycoplasma agalactiae).